The sequence spans 65 residues: Keratin-associated protein 23-1 (65 aa).

In terms of assembly, interacts with hair keratins.

In terms of biological role, in the hair cortex, hair keratin intermediate filaments are embedded in an interfilamentous matrix, consisting of hair keratin-associated proteins (KRTAP), which are essential for the formation of a rigid and resistant hair shaft through their extensive disulfide bond cross-linking with abundant cysteine residues of hair keratins. The matrix proteins include the high-sulfur and high-glycine-tyrosine keratins. This chain is Keratin-associated protein 23-1 (KRTAP23-1), found in Homo sapiens (Human).